The following is a 102-amino-acid chain: Small ribosomal subunit protein eS24 (102 aa).

It belongs to the eukaryotic ribosomal protein eS24 family.

This Methanococcus maripaludis (strain DSM 14266 / JCM 13030 / NBRC 101832 / S2 / LL) protein is Small ribosomal subunit protein eS24.